The primary structure comprises 365 residues: Alpha-keto acid-binding periplasmic protein TakP (365 aa).

Positions 1 to 26 (MDRRSFITKAAVGGAAASALAAPALA) form a signal peptide, tat-type signal. Substrate contacts are provided by residues 99 to 100 (YY), glutamine 156, and arginine 177. Glutamine 156 contributes to the Na(+) binding site. Positions 214, 215, and 240 each coordinate Na(+).

It belongs to the bacterial solute-binding protein 7 family. As to quaternary structure, homodimer. The complex comprises the extracytoplasmic solute receptor protein TakP, and the two transmembrane proteins TakQ and TakM. Predicted to be exported by the Tat system. The position of the signal peptide cleavage has not been experimentally proven.

It localises to the periplasm. Part of the tripartite ATP-independent periplasmic (TRAP) transport system TakPQM involved in the uptake of alpha-keto acids. This protein specifically binds alpha-keto acids including pyruvate, oxobutyrate, oxovalerate and 4-methyl-2-oxovalerate. Ligand-binding affinity increases with the increasing chain length of the aliphatic backbone of the ligand. Is not able to bind alpha-ketoglutarate. This Cereibacter sphaeroides (strain ATCC 17023 / DSM 158 / JCM 6121 / CCUG 31486 / LMG 2827 / NBRC 12203 / NCIMB 8253 / ATH 2.4.1.) (Rhodobacter sphaeroides) protein is Alpha-keto acid-binding periplasmic protein TakP.